A 1024-amino-acid polypeptide reads, in one-letter code: Multidrug resistance protein MdtC (1024 aa).

The next 12 membrane-spanning stretches (helical) occupy residues 12–32 (VATT…FSLL), 333–353 (EVER…FIFL), 360–380 (LIPA…MYLC), 387–407 (LSLM…IVVL), 435–455 (VLSM…MAGL), 469–489 (VAIG…CAWL), 528–548 (WVMV…ISIP), 853–873 (LWLI…LYES), 875–895 (VHPL…LLAL), 897–917 (LFDA…IGIV), 953–973 (PIIM…LSSG), and 984–1004 (ITIV…TPVI).

Belongs to the resistance-nodulation-cell division (RND) (TC 2.A.6) family. MdtC subfamily. As to quaternary structure, part of a tripartite efflux system composed of MdtA, MdtB and MdtC. MdtC forms a heteromultimer with MdtB.

The protein resides in the cell inner membrane. The sequence is that of Multidrug resistance protein MdtC from Yersinia pestis bv. Antiqua (strain Antiqua).